Consider the following 283-residue polypeptide: Elongation factor Ts (283 aa).

The interval 80–83 (TDFV) is involved in Mg(2+) ion dislocation from EF-Tu.

This sequence belongs to the EF-Ts family.

It is found in the cytoplasm. Associates with the EF-Tu.GDP complex and induces the exchange of GDP to GTP. It remains bound to the aminoacyl-tRNA.EF-Tu.GTP complex up to the GTP hydrolysis stage on the ribosome. In Salmonella gallinarum (strain 287/91 / NCTC 13346), this protein is Elongation factor Ts.